The following is a 231-amino-acid chain: Ribosomal RNA small subunit methyltransferase G (231 aa).

S-adenosyl-L-methionine is bound by residues glycine 75, 125–126 (GE), and arginine 140. Positions 204–213 (AEAEEGDSPE) are enriched in acidic residues. The disordered stretch occupies residues 204–231 (AEAEEGDSPEAADASRGVILELTKKNKG).

This sequence belongs to the methyltransferase superfamily. RNA methyltransferase RsmG family.

It is found in the cytoplasm. Its function is as follows. Specifically methylates the N7 position of a guanine in 16S rRNA. This Rhodopirellula baltica (strain DSM 10527 / NCIMB 13988 / SH1) protein is Ribosomal RNA small subunit methyltransferase G.